Here is a 150-residue protein sequence, read N- to C-terminus: Globin-2 A chain (150 aa).

Val2 is subject to Blocked amino end (Val). Residues 10 to 150 enclose the Globin domain; sequence CGSEAIKANL…ALVGVVQAAL (141 aa). Position 102 (His102) interacts with heme b.

It belongs to the globin family. Heterotetramer of two alpha chains and two beta chains.

The sequence is that of Globin-2 A chain from Anadara inaequivalvis (Inequivalve ark).